A 367-amino-acid polypeptide reads, in one-letter code: Selenoprotein Pa (367 aa).

Positions 1 to 19 (MWKALSLTLALCLLVGCSA) are cleaved as a signal peptide. Residue Sec-59 is a non-standard amino acid, selenocysteine. Residue Asn-109 is glycosylated (N-linked (GlcNAc...) asparagine). Over residues 191 to 220 (EVNKPVEEEPRQDHGHHEHGHHEHQGEAER) the composition is skewed to basic and acidic residues. The disordered stretch occupies residues 191 to 241 (EVNKPVEEEPRQDHGHHEHGHHEHQGEAERHRHGHHHPHHHHHHHRGQQQV). Positions 221-237 (HRHGHHHPHHHHHHHRG) are enriched in basic residues. 16 non-standard amino acids (selenocysteine) are found at residues Sec-267, Sec-273, Sec-279, Sec-290, Sec-292, Sec-294, Sec-310, Sec-320, Sec-322, Sec-336, Sec-338, Sec-346, Sec-353, Sec-355, Sec-362, and Sec-364. Residues 309-367 (LUHCDEPLPASUPUQGLKEQDNHIKETUQURPAPPAEUELSQPTUVUPAGDATUGURKK) are disordered. Basic and acidic residues predominate over residues 326–336 (KEQDNHIKETU).

The protein belongs to the selenoprotein P family.

It localises to the secreted. Might be responsible for some of the extracellular antioxidant defense properties of selenium or might be involved in the transport of selenium. The sequence is that of Selenoprotein Pa (sepp1a) from Danio rerio (Zebrafish).